Reading from the N-terminus, the 128-residue chain is Small ribosomal subunit protein eS8 (128 aa).

This sequence belongs to the eukaryotic ribosomal protein eS8 family. In terms of assembly, part of the 30S ribosomal subunit.

This Methanococcus maripaludis (strain C6 / ATCC BAA-1332) protein is Small ribosomal subunit protein eS8.